The sequence spans 550 residues: Chaperonin GroEL (550 aa).

Residues 30–33 (TLGP), lysine 51, 87–91 (DGTTT), glycine 416, 480–482 (NVA), and aspartate 496 contribute to the ATP site. Positions 525-550 (LPKKDDEGGGGDMGGMGGMGGMGGMM) are disordered. Positions 534–550 (GGDMGGMGGMGGMGGMM) are enriched in gly residues.

The protein belongs to the chaperonin (HSP60) family. Forms a cylinder of 14 subunits composed of two heptameric rings stacked back-to-back. Interacts with the co-chaperonin GroES.

The protein resides in the cytoplasm. It catalyses the reaction ATP + H2O + a folded polypeptide = ADP + phosphate + an unfolded polypeptide.. Its function is as follows. Together with its co-chaperonin GroES, plays an essential role in assisting protein folding. The GroEL-GroES system forms a nano-cage that allows encapsulation of the non-native substrate proteins and provides a physical environment optimized to promote and accelerate protein folding. This Halorhodospira halophila (strain DSM 244 / SL1) (Ectothiorhodospira halophila (strain DSM 244 / SL1)) protein is Chaperonin GroEL.